We begin with the raw amino-acid sequence, 413 residues long: Tyrosine--tRNA ligase (413 aa).

Residue tyrosine 34 participates in L-tyrosine binding. The 'HIGH' region motif lies at 39–48 (CTAQSLHVGN). L-tyrosine is bound by residues tyrosine 171 and glutamine 175. The 'KMSKS' region signature appears at 231–235 (KMGKT). Lysine 234 serves as a coordination point for ATP. Positions 346–411 (IPITELLVTI…GKKCHILVKI (66 aa)) constitute an S4 RNA-binding domain.

This sequence belongs to the class-I aminoacyl-tRNA synthetase family. TyrS type 1 subfamily. In terms of assembly, homodimer.

Its subcellular location is the cytoplasm. It catalyses the reaction tRNA(Tyr) + L-tyrosine + ATP = L-tyrosyl-tRNA(Tyr) + AMP + diphosphate + H(+). Functionally, catalyzes the attachment of tyrosine to tRNA(Tyr) in a two-step reaction: tyrosine is first activated by ATP to form Tyr-AMP and then transferred to the acceptor end of tRNA(Tyr). This Orientia tsutsugamushi (strain Ikeda) (Rickettsia tsutsugamushi) protein is Tyrosine--tRNA ligase.